The sequence spans 82 residues: Protein costars (82 aa).

Belongs to the costars family.

Functionally, modulates actin dynamics and cell motility. The polypeptide is Protein costars (cosA) (Dictyostelium discoideum (Social amoeba)).